The chain runs to 277 residues: uncharacterized protein (277 aa).

3 Solcar repeats span residues 1–84 (MDQA…SKRV), 96–179 (ISVL…LKLW), and 184–268 (PTSL…VGMH). A run of 6 helical transmembrane segments spans residues 3-24 (QAIA…LDLA), 60-80 (LSIN…IYDF), 102-122 (LCSS…IWVV), 152-172 (CYAG…QFMA), 190-210 (IFMS…LLVI), and 240-261 (FYKG…TFLV).

The protein belongs to the mitochondrial carrier (TC 2.A.29) family.

It localises to the mitochondrion inner membrane. This is an uncharacterized protein from Schizosaccharomyces pombe (strain 972 / ATCC 24843) (Fission yeast).